Consider the following 164-residue polypeptide: Ubiquitin-fold modifier-conjugating enzyme 1 (164 aa).

The Glycyl thioester intermediate role is filled by cysteine 116.

Belongs to the ubiquitin-conjugating enzyme family. UFC1 subfamily.

Its function is as follows. E2-like enzyme which forms an intermediate with UFM1 via a thioester linkage. In Drosophila sechellia (Fruit fly), this protein is Ubiquitin-fold modifier-conjugating enzyme 1.